The primary structure comprises 427 residues: Serine--tRNA ligase (427 aa).

L-serine is bound at residue Thr231–Glu233. Residue Arg262 to Glu264 participates in ATP binding. Position 285 (Glu285) interacts with L-serine. Glu349–Ser352 is a binding site for ATP. Ser385 contacts L-serine.

It belongs to the class-II aminoacyl-tRNA synthetase family. Type-1 seryl-tRNA synthetase subfamily. As to quaternary structure, homodimer. The tRNA molecule binds across the dimer.

The protein resides in the cytoplasm. The enzyme catalyses tRNA(Ser) + L-serine + ATP = L-seryl-tRNA(Ser) + AMP + diphosphate + H(+). It carries out the reaction tRNA(Sec) + L-serine + ATP = L-seryl-tRNA(Sec) + AMP + diphosphate + H(+). Its pathway is aminoacyl-tRNA biosynthesis; selenocysteinyl-tRNA(Sec) biosynthesis; L-seryl-tRNA(Sec) from L-serine and tRNA(Sec): step 1/1. In terms of biological role, catalyzes the attachment of serine to tRNA(Ser). Is also able to aminoacylate tRNA(Sec) with serine, to form the misacylated tRNA L-seryl-tRNA(Sec), which will be further converted into selenocysteinyl-tRNA(Sec). This is Serine--tRNA ligase from Rhizobium rhizogenes (strain K84 / ATCC BAA-868) (Agrobacterium radiobacter).